We begin with the raw amino-acid sequence, 361 residues long: MTSADSLLFTSLGPSPSSGDGDCKFNEEFKFILLPLSYAVVFVLGLALNAPTLWLFLFRLRPWDATATYMFHLALSDTLYVLSLPTLVYYYAARNHWPFGTGFCKFVRFLFYWNLYCSVLFLTCISVHRYMGICHPLRAIRWGRPRFAGLLCLGVWLVVAGCLVPNLFFVTTNANGTTILCHDTTLPEEFDHYVYFSSTIMVLLFGFPFLITLVCYGLMARRLYRPLPGAGQSSSRLRSLRTIAVVLTVFAVCFVPFHITRTIYYLARLLNAECRVLNIVNVVYKVTRPLASANSCLDPVLYLFTGDKYRNQLQQLCRGSTPKRRTTASSLALVTLHEESISRWADIHQDSIFPAYEGDRL.

Over 1–30 (MTSADSLLFTSLGPSPSSGDGDCKFNEEFK) the chain is Extracellular. A helical transmembrane segment spans residues 31–58 (FILLPLSYAVVFVLGLALNAPTLWLFLF). Over 59 to 68 (RLRPWDATAT) the chain is Cytoplasmic. Residues 69-91 (YMFHLALSDTLYVLSLPTLVYYY) traverse the membrane as a helical segment. Topologically, residues 92-108 (AARNHWPFGTGFCKFVR) are extracellular. Cys104 and Cys181 are disulfide-bonded. The chain crosses the membrane as a helical span at residues 109 to 127 (FLFYWNLYCSVLFLTCISV). Over 128 to 149 (HRYMGICHPLRAIRWGRPRFAG) the chain is Cytoplasmic. A helical membrane pass occupies residues 150–170 (LLCLGVWLVVAGCLVPNLFFV). Topologically, residues 171-192 (TTNANGTTILCHDTTLPEEFDH) are extracellular. Asn175 carries N-linked (GlcNAc...) asparagine glycosylation. Residues 193 to 218 (YVYFSSTIMVLLFGFPFLITLVCYGL) form a helical membrane-spanning segment. Topologically, residues 219–242 (MARRLYRPLPGAGQSSSRLRSLRT) are cytoplasmic. A helical transmembrane segment spans residues 243-265 (IAVVLTVFAVCFVPFHITRTIYY). The Extracellular portion of the chain corresponds to 266-283 (LARLLNAECRVLNIVNVV). Residues 284–305 (YKVTRPLASANSCLDPVLYLFT) form a helical membrane-spanning segment. Over 306–361 (GDKYRNQLQQLCRGSTPKRRTTASSLALVTLHEESISRWADIHQDSIFPAYEGDRL) the chain is Cytoplasmic.

The protein belongs to the G-protein coupled receptor 1 family. In terms of processing, phosphorylation of Ser-329 and Ser-330 is a key step in agonist-dependent desensitization and loss of surface P2RY4. This phosphorylation does not involve PKC, nor other calcium-activated kinases. In terms of tissue distribution, expressed in the liver, intestine, stomach, bladder and lung.

It localises to the cell membrane. In terms of biological role, receptor for ATP and UTP coupled to G-proteins that activate a phosphatidylinositol-calcium second messenger system. This is P2Y purinoceptor 4 (P2ry4) from Mus musculus (Mouse).